A 568-amino-acid polypeptide reads, in one-letter code: MTEAEVGAEDLDTLLDELDYLPGHFHLEMQLNFEPRSPAQLRARDLKLQREGLRQELELVATPQLPAVRHLLGTFSFYLEELGDAREHFLEVARKDPGNLNAWANLAHVYGQLGQEEEEEASAGRLASLMGLEGDPEDAGDPRLRAARCLAEQGYAHGFDVGCASPEERAQVLEAGIALYDKALGYGQQIPIEEKRSWYFTMATLFIRLDGIFLEMGSEEQKRLPAFNRTLALLGEVLKSSDSRHQALAWCYVGMLLERKDTFSTTPMGVHEYGYSGTEPLDCFGKAIEIAKNQPPILNRLAKIFHFLGKQDMAVGTCNMVLAVLTDPELNWQAYCTRAKVRIRAYVHDLERAKVGLGGLPDRNHLACAKADLEEVVKVCPSLRTYLDISQVYYYMGVDAMRELLAVDEAALNQALVFLAKAGELELGDTLPELQLLRGKCLRVQGEDANAAACFKRAVELDDEGSSHTEGFGCLLEALLAQWSQAQLSDGEVGYEVDVWLRHAQGKYPAARLRQELQRVWRGHTEEVLGLARALVAQGRPALVRLLFETMEHEGEDAGGSGKSRVSS.

TPR repeat units lie at residues 66–99 (PAVR…DPGN), 101–133 (NAWA…MGLE), 155–190 (YAHG…GQQI), 203–237 (ATLF…LGEV), 260–294 (KDTF…AKNQ), 296–328 (PILN…LTDP), and 432–465 (PELQ…DDEG).

The polypeptide is Tetratricopeptide repeat protein 22 (Ttc22) (Mus musculus (Mouse)).